We begin with the raw amino-acid sequence, 192 residues long: 7-methyl-GTP pyrophosphatase (192 aa).

Catalysis depends on aspartate 69, which acts as the Proton acceptor.

This sequence belongs to the Maf family. YceF subfamily. A divalent metal cation is required as a cofactor.

It is found in the cytoplasm. It carries out the reaction N(7)-methyl-GTP + H2O = N(7)-methyl-GMP + diphosphate + H(+). Its function is as follows. Nucleoside triphosphate pyrophosphatase that hydrolyzes 7-methyl-GTP (m(7)GTP). May have a dual role in cell division arrest and in preventing the incorporation of modified nucleotides into cellular nucleic acids. The chain is 7-methyl-GTP pyrophosphatase from Pseudomonas syringae pv. syringae (strain B728a).